A 456-amino-acid chain; its full sequence is Shootin-1 (456 aa).

Methionine 1 bears the N-acetylmethionine mark. Serine 3 and serine 4 each carry phosphoserine. Positions 7-353 (EKQLQLITSL…RVNQSENSVP (347 aa)) form a coiled coil. Serine 101 and serine 249 each carry phosphoserine; by PAK1. Disordered stretches follow at residues 343 to 405 (KRVN…VTDL) and 418 to 445 (KKGV…CESA). A compositionally biased stretch (pro residues) spans 352–369 (VPPPPPPPPPLPPPPPNP). Residue serine 375 is modified to Phosphoserine.

The protein belongs to the shootin family. As to quaternary structure, interacts with L1CAM; this interaction occurs in axonal growth cones. Interacts with actin filament retrograde flow; this interaction is enhanced in a netrin-1- and PAK1-dependent manner and promotes F-actin-substrate coupling and concomitant formation of traction forces at axonal growth cones. Interacts with RUFY3. Interacts with PFN2. Interacts (via N-terminus) with KIF20B; this interaction is direct and promotes the association of SHTN1 to microtubules in primary neurons. Associates with microtubule. Post-translationally, phosphorylated on Ser-101 and Ser-249 by PAK1 through a CDC42- and RAC1-dependent signaling pathway, which enhances its association with F-actin retrograde flow in filopodia and lamellipodia of axonal growth cones. Phosphorylation on Ser-101 and Ser-249 is increased by netrin-1.

Its subcellular location is the perikaryon. The protein resides in the cell projection. The protein localises to the axon. It is found in the growth cone. It localises to the cytoplasm. Its subcellular location is the cytoskeleton. The protein resides in the filopodium. The protein localises to the lamellipodium. Involved in the generation of internal asymmetric signals required for neuronal polarization and neurite outgrowth. Mediates netrin-1-induced F-actin-substrate coupling or 'clutch engagement' within the axon growth cone through activation of CDC42, RAC1 and PAK1-dependent signaling pathway, thereby converting the F-actin retrograde flow into traction forces, concomitantly with filopodium extension and axon outgrowth. Plays a role in cytoskeletal organization by regulating the subcellular localization of phosphoinositide 3-kinase (PI3K) activity at the axonal growth cone. Also plays a role in regenerative neurite outgrowth. In the developing cortex, cooperates with KIF20B to promote both the transition from the multipolar to the bipolar stage and the radial migration of cortical neurons from the ventricular zone toward the superficial layer of the neocortex. Involved in the accumulation of phosphatidylinositol 3,4,5-trisphosphate (PIP3) in the growth cone of primary hippocampal neurons. The sequence is that of Shootin-1 from Pongo abelii (Sumatran orangutan).